We begin with the raw amino-acid sequence, 122 residues long: MFKKVDRKASRQKKQMSIRNKISGTPERPRLSVFRSNTNIFAQLIDDVNGVTLVSASTIDKALKGSIANGGNIEAAKAVGKAIAERAKEKGIDAIVFDRSGYKYTGRVAALADAAREAGLSF.

Over residues 1–16 the composition is skewed to basic residues; it reads MFKKVDRKASRQKKQM. Residues 1–29 are disordered; that stretch reads MFKKVDRKASRQKKQMSIRNKISGTPERP.

The protein belongs to the universal ribosomal protein uL18 family. Part of the 50S ribosomal subunit; part of the 5S rRNA/L5/L18/L25 subcomplex. Contacts the 5S and 23S rRNAs.

In terms of biological role, this is one of the proteins that bind and probably mediate the attachment of the 5S RNA into the large ribosomal subunit, where it forms part of the central protuberance. In Fusobacterium nucleatum subsp. nucleatum (strain ATCC 25586 / DSM 15643 / BCRC 10681 / CIP 101130 / JCM 8532 / KCTC 2640 / LMG 13131 / VPI 4355), this protein is Large ribosomal subunit protein uL18.